We begin with the raw amino-acid sequence, 279 residues long: Non-structural maintenance of chromosomes element 3 homolog (279 aa).

The interval 1-52 (MLQKPRGRGRPSTQADPERDWGGAGEEGPSTSRAAGGSSQGSRASLSAPTVG) is disordered. Residues 30–48 (STSRAAGGSSQGSRASLSA) show a composition bias toward low complexity. Ser-38 carries the post-translational modification Phosphoserine. Residues 52–279 (GPRTQKQLEL…ATASAPATSS (228 aa)) form an interaction with NSMCE1 region. Residues 59-259 (LELKVAELVQ…KDWPTQYCEA (201 aa)) enclose the MAGE domain.

In terms of assembly, component of the SMC5-SMC6 complex which consists at least of SMC5, SMC6, NSMCE2, NSMCE1, NSMCE4A or EID3 and NSMCE3. NSMCE1, NSMCE4A or EID3 and NSMCE3 probably form a subcomplex that bridges the head domains of the SMC5:SMC6 heterodimer. Interacts with PJA1. Interacts with E2F1 (via C-terminus). Interacts with NGFR (via C-terminus). Interacts with NSMCE1. Interacts with NSMCE4. Interacts with SMC6. Interacts with EID3. In terms of tissue distribution, ubiquitous.

It is found in the cytoplasm. It localises to the nucleus. The protein localises to the chromosome. The protein resides in the telomere. Component of the SMC5-SMC6 complex, a complex involved in repair of DNA double-strand breaks by homologous recombination. The complex may promote sister chromatid homologous recombination by recruiting the SMC1-SMC3 cohesin complex to double-strand breaks. The complex is required for telomere maintenance via recombination in ALT (alternative lengthening of telomeres) cell lines and mediates sumoylation of shelterin complex (telosome) components which is proposed to lead to shelterin complex disassembly in ALT-associated PML bodies (APBs). In vitro enhances ubiquitin ligase activity of NSMCE1. Proposed to act through recruitment and/or stabilization of the Ubl-conjugating enzyme (E2) at the E3:substrate complex. May be a growth suppressor that facilitates the entry of the cell into cell cycle arrest. The protein is Non-structural maintenance of chromosomes element 3 homolog (Nsmce3) of Mus musculus (Mouse).